Consider the following 209-residue polypeptide: Uracil phosphoribosyltransferase (209 aa).

Residues Arg79, Arg104, and Asp131 to Ser139 each bind 5-phospho-alpha-D-ribose 1-diphosphate. Uracil is bound by residues Ile194 and Gly199–Ala201. Asp200 contacts 5-phospho-alpha-D-ribose 1-diphosphate.

Belongs to the UPRTase family. The cofactor is Mg(2+).

The enzyme catalyses UMP + diphosphate = 5-phospho-alpha-D-ribose 1-diphosphate + uracil. The protein operates within pyrimidine metabolism; UMP biosynthesis via salvage pathway; UMP from uracil: step 1/1. With respect to regulation, allosterically activated by GTP. In terms of biological role, catalyzes the conversion of uracil and 5-phospho-alpha-D-ribose 1-diphosphate (PRPP) to UMP and diphosphate. This is Uracil phosphoribosyltransferase from Clostridioides difficile (strain 630) (Peptoclostridium difficile).